Consider the following 482-residue polypeptide: MDIQQGGNDLISLAATIRTELQQKLSSKARIHLPFDEDRTEFDKANLRFTQYERPTYLAIVDPVCEDDVIEAVKYARGKGIPFTPRGGHHSVTTTMGRFQNGICINMRPLNQMRWYAEKRHVTIGGGAITDEFVRFVHDLGMEVTFGAGLGRLQGKYGFLNDNMVSCKLVLADGSTVIASKDSHPDLFWALRGAGHNFGIALEATFQVYPQAHGGIHHTWDLEYTLDQCDEVFRTLNSVYESMPAELAIFILWLRQSSGRKHIILVNLVWSGPAAGADPYVQRFESLQPVLNSGRKSVPWPELPFSTYKEINKLFCNPEIWLRGPYKMMGAACVERFDLKTTREFFESVKSLSEEWEDRGWFSAMFECLPDQRVREISDDATAFPWRAGSNHFLMLNATPKRMEDRKVFEDHLNYWKRRFIETSGYGRLQQYVSYGNGTSTMKDPPEALYGYEPWRLEKLRNLKQKYDPDNVFRWYQPLLEP.

The region spanning 53–211 (ERPTYLAIVD…LEATFQVYPQ (159 aa)) is the FAD-binding PCMH-type domain.

It belongs to the oxygen-dependent FAD-linked oxidoreductase family. The cofactor is FAD.

It participates in secondary metabolite biosynthesis. In terms of biological role, FAD-linked oxidoreductase; part of the gene cluster that mediates the biosynthesis of alternapyrone derivatives. Alternapyrone is a decaketide with octa-methylation from methionine on every C2 unit except the third unit. All the domains in the polyketide synthase alt5 are apparently involved in alternapyrone synthesis, that is, the 8 CMeT, 7 KR, 7 DH, and 4 ER reactions in the 9 KS-mediated condensation steps required for alternapyrone synthesis. the alternapyrone produced by alt5 might be intensively modified by cytochrome P450 monooxygenases alt1, alt2 and alt3 and FAD-dependent oxidoreductase alt4 present in the alt gene cluster. The sequence is that of FAD-linked oxidoreductase alt4 from Alternaria solani.